The sequence spans 214 residues: Thymidylate kinase (214 aa).

Position 7–14 (7–14 (GVDGAGKR)) interacts with ATP. DTMP contacts are provided by Asp-9, Tyr-39, Phe-70, Arg-74, Arg-95, Asn-100, and Tyr-103. A Mg(2+)-binding site is contributed by Asp-9. The tract at residues 147–159 (GERSRGRAQRDPG) is LID. The dTMP site is built by Asp-163 and Tyr-165. Glu-166 is a binding site for Mg(2+).

Belongs to the thymidylate kinase family. As to quaternary structure, homodimer. It depends on Mg(2+) as a cofactor.

It catalyses the reaction dTMP + ATP = dTDP + ADP. Its pathway is pyrimidine metabolism; dTTP biosynthesis. Functionally, catalyzes the reversible phosphorylation of deoxythymidine monophosphate (dTMP) to deoxythymidine diphosphate (dTDP), using ATP as its preferred phosphoryl donor. Situated at the junction of both de novo and salvage pathways of deoxythymidine triphosphate (dTTP) synthesis, is essential for DNA synthesis and cellular growth. This Mycobacterium tuberculosis (strain CDC 1551 / Oshkosh) protein is Thymidylate kinase (tmk).